We begin with the raw amino-acid sequence, 272 residues long: DNA repair protein RecO (272 aa).

The protein belongs to the RecO family.

In terms of biological role, involved in DNA repair and RecF pathway recombination. In Latilactobacillus sakei subsp. sakei (strain 23K) (Lactobacillus sakei subsp. sakei), this protein is DNA repair protein RecO.